Consider the following 271-residue polypeptide: Tryptophan synthase alpha chain (271 aa).

Catalysis depends on proton acceptor residues Glu-49 and Asp-60.

The protein belongs to the TrpA family. Tetramer of two alpha and two beta chains.

The enzyme catalyses (1S,2R)-1-C-(indol-3-yl)glycerol 3-phosphate + L-serine = D-glyceraldehyde 3-phosphate + L-tryptophan + H2O. It functions in the pathway amino-acid biosynthesis; L-tryptophan biosynthesis; L-tryptophan from chorismate: step 5/5. The alpha subunit is responsible for the aldol cleavage of indoleglycerol phosphate to indole and glyceraldehyde 3-phosphate. In Burkholderia lata (strain ATCC 17760 / DSM 23089 / LMG 22485 / NCIMB 9086 / R18194 / 383), this protein is Tryptophan synthase alpha chain.